We begin with the raw amino-acid sequence, 5101 residues long: Malformin synthetase mlfA (5101 aa).

Residues Glu225 to Leu616 are adenylation 1. Positions Ser757–Glu830 constitute a Carrier 1 domain. The residue at position 791 (Ser791) is an O-(pantetheine 4'-phosphoryl)serine. The interval Glu868–Ala1299 is condensation 1. The tract at residues Asp1327 to Arg1716 is adenylation 2. Residues Thr1854–Ala1931 enclose the Carrier 2 domain. Ser1891 carries the O-(pantetheine 4'-phosphoryl)serine modification. Disordered regions lie at residues Gly1932–Asp1961 and Gly1994–Ala2020. 2 stretches are compositionally biased toward low complexity: residues Ser1934–Asp1958 and Ser1996–Ser2013. Residues Glu2066–Leu2481 form a condensation 2 region. The interval Arg2504–Leu2896 is adenylation 3. Positions Arg3032–Arg3108 constitute a Carrier 3 domain. Ser3069 carries the post-translational modification O-(pantetheine 4'-phosphoryl)serine. Condensation stretches follow at residues Trp3125–Gln3590 and Asn3611–Val4030. The segment at His4055–Phe4445 is adenylation 4. Positions Met4579–Ile4655 constitute a Carrier 4 domain. Position 4616 is an O-(pantetheine 4'-phosphoryl)serine (Ser4616). Residues Ile4712–Glu5097 form a condensation 5 region.

This sequence belongs to the NRP synthetase family.

The protein operates within secondary metabolite biosynthesis. In terms of biological role, nonribosomal peptide synthetase; part of the gene cluster that mediates the biosynthesis of malformins, cyclic pentapeptides with a disulfide bond between 2 consecutive cysteins, that show potential anti-tumor as well as antimalarial and antitrypanosomal properties. The nonribosomal peptide synthetase mlfA is responsible of the formation of the cyclic pentapeptide. The malformin biosynthesis clusters in malformin-producing fungi also contain enzymes involved in the formation of the disulfide bond between the two consecutive cysteins within malformins, in addition to additional tailoring enzymes such as methyltransferases or oxidoreductases. They are also composed of up to 4 major facilitator superfamily transporters, and transcription factors probably involved in the regulation of the expression of those clusters. This chain is Malformin synthetase mlfA, found in Aspergillus kawachii (strain NBRC 4308) (White koji mold).